Here is a 633-residue protein sequence, read N- to C-terminus: Micronuclear linker histone polyprotein (633 aa).

DNA-binding regions (HMG box) lie at residues 12 to 74 (PPKK…LFHY) and 96 to 164 (PKKP…KKWN). The segment at 170-633 (AAQKKQTKRK…AYGKKANKKQ (464 aa)) is disordered. The segment covering 174-190 (KQTKRKNSTSKSRRSSS) has biased composition (basic residues). Low complexity-rich tracts occupy residues 212-224 (SSASQGRSQSSSS) and 253-271 (NSTSNKRNSSSSSKRSSSS). Composition is skewed to basic residues over residues 272–309 (KNKKSSSSKNKKSSSSKGRKSSSSRGRKASSSKNRKSS) and 330–352 (SNKRKASSSRGRKSSSSKGRKSS). 2 stretches are compositionally biased toward basic and acidic residues: residues 353–374 (KSQERKNSHADTSKQMEDEGQK) and 382–401 (AKRDESSKKSRRNSMKEART). A compositionally biased stretch (low complexity) spans 406 to 416 (NKSASKASKSG). Positions 417–444 (SKSKGKSASKSKGKSSSKGKNSKSRSAS) are enriched in basic residues. A compositionally biased stretch (polar residues) spans 446–469 (PKSNAAQNSNNTHQTADSSENASS). Residues 478 to 491 (RQREQKDMVNEKSN) are compositionally biased toward basic and acidic residues. The segment covering 496 to 524 (SKGKKNSKSNTRSKSKSKSASKSRKNASK) has biased composition (basic residues). 2 stretches are compositionally biased toward basic and acidic residues: residues 540-550 (SRSESKSKSEA) and 559-612 (EVIE…EDSK).

Post-translationally, all four histones are processed from the precursor molecule. Phosphorylated in growing and dividing cells but not in nongrowing (starved) cells. In terms of processing, the N-terminus of MIC LH-alpha and MIC LH-delta is blocked.

Its subcellular location is the nucleus. The protein resides in the chromosome. This Tetrahymena thermophila (strain SB210) protein is Micronuclear linker histone polyprotein (MLH).